The following is a 203-amino-acid chain: Large ribosomal subunit protein eL15 (203 aa).

The disordered stretch occupies residues 160–186; the sequence is ESRGLTSTGKRSRGLNKGHRYNKTRAG. Residues 169–186 are compositionally biased toward basic residues; the sequence is KRSRGLNKGHRYNKTRAG.

This sequence belongs to the eukaryotic ribosomal protein eL15 family. In terms of assembly, component of the large ribosomal subunit (LSU). Mature N.crassa ribosomes consist of a small (40S) and a large (60S) subunit. The 40S small subunit contains 1 molecule of ribosomal RNA (18S rRNA) and at least 32 different proteins. The large 60S subunit contains 3 rRNA molecules (26S, 5.8S and 5S rRNA) and at least 42 different proteins.

It is found in the cytoplasm. Functionally, component of the ribosome, a large ribonucleoprotein complex responsible for the synthesis of proteins in the cell. The small ribosomal subunit (SSU) binds messenger RNAs (mRNAs) and translates the encoded message by selecting cognate aminoacyl-transfer RNA (tRNA) molecules. The large subunit (LSU) contains the ribosomal catalytic site termed the peptidyl transferase center (PTC), which catalyzes the formation of peptide bonds, thereby polymerizing the amino acids delivered by tRNAs into a polypeptide chain. The nascent polypeptides leave the ribosome through a tunnel in the LSU and interact with protein factors that function in enzymatic processing, targeting, and the membrane insertion of nascent chains at the exit of the ribosomal tunnel. In Neurospora crassa (strain ATCC 24698 / 74-OR23-1A / CBS 708.71 / DSM 1257 / FGSC 987), this protein is Large ribosomal subunit protein eL15 (rpl-15).